The chain runs to 199 residues: MAKNKYSEPDYWSKKAFAENYPARSVYKLEEMNKKFNLFSPNDKVLDLGAAPGSWTVYVLRFLNKEGRVTAVDLKPLDSSVYDERLNFFQGDMFDKGIIKSVKELGPYDAVICDAAPATTGNKTVDTARSSGLVELALYYAQEQLKQGGSFVVKIFQGGDQQIHLNNLRKCFKTARAFKPEACRSSSFETYLIGLDFKG.

Residues glycine 53, tryptophan 55, aspartate 73, aspartate 92, and aspartate 114 each coordinate S-adenosyl-L-methionine. Lysine 154 functions as the Proton acceptor in the catalytic mechanism.

The protein belongs to the class I-like SAM-binding methyltransferase superfamily. RNA methyltransferase RlmE family.

The protein localises to the cytoplasm. The enzyme catalyses uridine(2552) in 23S rRNA + S-adenosyl-L-methionine = 2'-O-methyluridine(2552) in 23S rRNA + S-adenosyl-L-homocysteine + H(+). Functionally, specifically methylates the uridine in position 2552 of 23S rRNA at the 2'-O position of the ribose in the fully assembled 50S ribosomal subunit. The sequence is that of Ribosomal RNA large subunit methyltransferase E from Treponema denticola (strain ATCC 35405 / DSM 14222 / CIP 103919 / JCM 8153 / KCTC 15104).